We begin with the raw amino-acid sequence, 60 residues long: UPF0434 protein Aave_2563 (60 aa).

This sequence belongs to the UPF0434 family.

In Paracidovorax citrulli (strain AAC00-1) (Acidovorax citrulli), this protein is UPF0434 protein Aave_2563.